The sequence spans 463 residues: Siroheme synthase (463 aa).

The interval 1 to 203 is precorrin-2 dehydrogenase /sirohydrochlorin ferrochelatase; that stretch reads MDYLPLFHKL…GQGAEAERLL (203 aa). Residues 22–23 and 43–44 each bind NAD(+); these read EI and PE. At serine 128 the chain carries Phosphoserine. A uroporphyrinogen-III C-methyltransferase region spans residues 216 to 463; the sequence is GEVYLVGAGP…LAWFEGAQNS (248 aa). Residue proline 225 participates in S-adenosyl-L-methionine binding. Aspartate 248 (proton acceptor) is an active-site residue. Lysine 270 serves as the catalytic Proton donor. Residues 301 to 303, isoleucine 306, 331 to 332, methionine 383, and glycine 412 each bind S-adenosyl-L-methionine; these read GGD and TA.

In the N-terminal section; belongs to the precorrin-2 dehydrogenase / sirohydrochlorin ferrochelatase family. It in the C-terminal section; belongs to the precorrin methyltransferase family.

The catalysed reaction is uroporphyrinogen III + 2 S-adenosyl-L-methionine = precorrin-2 + 2 S-adenosyl-L-homocysteine + H(+). It catalyses the reaction precorrin-2 + NAD(+) = sirohydrochlorin + NADH + 2 H(+). It carries out the reaction siroheme + 2 H(+) = sirohydrochlorin + Fe(2+). It functions in the pathway cofactor biosynthesis; adenosylcobalamin biosynthesis; precorrin-2 from uroporphyrinogen III: step 1/1. The protein operates within cofactor biosynthesis; adenosylcobalamin biosynthesis; sirohydrochlorin from precorrin-2: step 1/1. It participates in porphyrin-containing compound metabolism; siroheme biosynthesis; precorrin-2 from uroporphyrinogen III: step 1/1. Its pathway is porphyrin-containing compound metabolism; siroheme biosynthesis; siroheme from sirohydrochlorin: step 1/1. It functions in the pathway porphyrin-containing compound metabolism; siroheme biosynthesis; sirohydrochlorin from precorrin-2: step 1/1. Its function is as follows. Multifunctional enzyme that catalyzes the SAM-dependent methylations of uroporphyrinogen III at position C-2 and C-7 to form precorrin-2 via precorrin-1. Then it catalyzes the NAD-dependent ring dehydrogenation of precorrin-2 to yield sirohydrochlorin. Finally, it catalyzes the ferrochelation of sirohydrochlorin to yield siroheme. The polypeptide is Siroheme synthase (Pseudomonas entomophila (strain L48)).